Consider the following 1405-residue polypeptide: DNA-directed RNA polymerase subunit beta' (1405 aa).

Zn(2+)-binding residues include C70, C72, C85, and C88. Mg(2+)-binding residues include D460, D462, and D464. Residues C814, C888, C895, and C898 each coordinate Zn(2+).

Belongs to the RNA polymerase beta' chain family. In terms of assembly, the RNAP catalytic core consists of 2 alpha, 1 beta, 1 beta' and 1 omega subunit. When a sigma factor is associated with the core the holoenzyme is formed, which can initiate transcription. Requires Mg(2+) as cofactor. The cofactor is Zn(2+).

It catalyses the reaction RNA(n) + a ribonucleoside 5'-triphosphate = RNA(n+1) + diphosphate. Functionally, DNA-dependent RNA polymerase catalyzes the transcription of DNA into RNA using the four ribonucleoside triphosphates as substrates. This Shewanella sp. (strain ANA-3) protein is DNA-directed RNA polymerase subunit beta'.